The chain runs to 431 residues: Citrate synthase (431 aa).

Catalysis depends on residues H306 and D364.

It belongs to the citrate synthase family.

The catalysed reaction is oxaloacetate + acetyl-CoA + H2O = citrate + CoA + H(+). The protein operates within carbohydrate metabolism; tricarboxylic acid cycle; isocitrate from oxaloacetate: step 1/2. The sequence is that of Citrate synthase (gltA) from Bartonella henselae (strain ATCC 49882 / DSM 28221 / CCUG 30454 / Houston 1) (Rochalimaea henselae).